Here is a 275-residue protein sequence, read N- to C-terminus: NH(3)-dependent NAD(+) synthetase (275 aa).

Residue 50 to 57 (GISGGVDS) coordinates ATP. D56 serves as a coordination point for Mg(2+). R147 provides a ligand contact to deamido-NAD(+). An ATP-binding site is contributed by T167. A Mg(2+)-binding site is contributed by E172. Residues K180 and D187 each contribute to the deamido-NAD(+) site. ATP contacts are provided by K196 and T218. Deamido-NAD(+) is bound at residue 267 to 268 (HK).

This sequence belongs to the NAD synthetase family. As to quaternary structure, homodimer.

The enzyme catalyses deamido-NAD(+) + NH4(+) + ATP = AMP + diphosphate + NAD(+) + H(+). Its pathway is cofactor biosynthesis; NAD(+) biosynthesis; NAD(+) from deamido-NAD(+) (ammonia route): step 1/1. Its function is as follows. Catalyzes the ATP-dependent amidation of deamido-NAD to form NAD. Uses ammonia as a nitrogen source. This is NH(3)-dependent NAD(+) synthetase from Pseudomonas syringae pv. syringae (strain B728a).